Consider the following 275-residue polypeptide: Probable aquaporin NIP7-1 (275 aa).

Over residues 1–11 the composition is skewed to basic and acidic residues; that stretch reads MNGEARSRVVD. The disordered stretch occupies residues 1–26; the sequence is MNGEARSRVVDQEAGSTPSTLRDEDH. The next 2 membrane-spanning stretches (helical) occupy residues 47–67 and 76–96; these read IVMAELVGTFILMFSVCGVIS and VGLLEYAVTAGLSVVVVVYSI. The NPA 1 motif lies at 105–107; that stretch reads NPS. Helical transmembrane passes span 127–147, 161–181, and 192–212; these read ITAQTLGATAATLVGVSVYGV, VSAFFVELIATSIVVFLASAL, and LTGFVIGTVISLGVLITGPIS. An NPA 2 motif is present at residues 217-219; sequence NPA. The chain crosses the membrane as a helical span at residues 231–251; it reads FEDLWIYMTAPVIGAIIGVLT. Serine 272 is modified (phosphoserine).

Belongs to the MIP/aquaporin (TC 1.A.8) family. NIP (TC 1.A.8.12) subfamily. In terms of tissue distribution, expressed in floral buds.

Its subcellular location is the membrane. In terms of biological role, aquaporins facilitate the transport of water and small neutral solutes across cell membranes. This is Probable aquaporin NIP7-1 (NIP7-1) from Arabidopsis thaliana (Mouse-ear cress).